Consider the following 519-residue polypeptide: Xylose import ATP-binding protein XylG (519 aa).

ABC transporter domains follow at residues 6–245 and 262–507; these read LTMR…VGRE and LEAR…LTPA. Position 38–45 (38–45) interacts with ATP; sequence GENGAGKS.

It belongs to the ABC transporter superfamily. Xylose importer (TC 3.A.1.2.4) family. As to quaternary structure, the complex is composed of two ATP-binding proteins (XylG), two transmembrane proteins (XylH) and a solute-binding protein (XylF).

It localises to the cell inner membrane. The enzyme catalyses D-xylose(out) + ATP + H2O = D-xylose(in) + ADP + phosphate + H(+). Part of the ABC transporter complex XylFGH involved in xylose import. Responsible for energy coupling to the transport system. In Burkholderia ambifaria (strain ATCC BAA-244 / DSM 16087 / CCUG 44356 / LMG 19182 / AMMD) (Burkholderia cepacia (strain AMMD)), this protein is Xylose import ATP-binding protein XylG.